Reading from the N-terminus, the 1064-residue chain is Protein NLRC3 (1064 aa).

The 322-residue stretch at 138 to 459 (RVSLTIGVAG…YCFIHLSLQE (322 aa)) folds into the NACHT domain. Residue 144 to 151 (GVAGVGKT) coordinates ATP. 16 LRR repeats span residues 338 to 362 (LGHL…LCEL), 570 to 593 (LSEL…TLAG), 632 to 662 (LPQL…VLSG), 664 to 687 (DCRI…ALAR), 692 to 715 (NRSL…ALAD), 720 to 743 (NRTL…CVAE), 748 to 771 (NQTI…QMAD), 776 to 799 (NRSL…ALAE), 804 to 827 (NQIL…VLMR), 832 to 855 (NQTL…ALTQ), 860 to 883 (NNTL…AIAV), 888 to 911 (NHSL…ALGQ), 916 to 939 (NRTL…SVAG), 972 to 995 (NRTL…ALAN), 1000 to 1022 (NSSL…IFVA), and 1028 to 1051 (NHGL…MISE).

It belongs to the NLRP family. As to quaternary structure, directly interacts (via CARD) with TMEM173/STING; this interaction reduces TMEM173 trafficking to the perinuclear region in response to interferon stimulatory DNA. Also interacts, but to a lesser extent, with TBK1. Interacts with TRAF6; this interaction results in decreased TRAF6 'Lys-63'-linked polyubiquitination, but leaves 'Lys-48'-linked chains unchanged, promoting TRAF6 protein degradation. Interacts with PIK3R1/PIK3R2; this interaction disrupts the association between PIK3R1/PIK3R2 and the p110 catalytic subunit PIK3CA/PIK3CB/PIK3CD and reduces PIK3R1/PIK3R2 activation. Weakly interacts with PYCARD/ASC. Interacts with CASP1 and CASP5. Expressed in bone marrow-derived macrophages.

Its subcellular location is the cytoplasm. In terms of biological role, negative regulator of the innate immune response. Attenuates signaling pathways activated by Toll-like receptors (TLRs) and the DNA sensor STING/TMEM173 in response to pathogen-associated molecular patterns, such as intracellular poly(dA:dT), but not poly(I:C), or in response to DNA virus infection, including that of Herpes simplex virus 1 (HSV1). May affect TLR4 signaling by acting at the level of TRAF6 ubiquitination, decreasing the activating 'Lys-63'-linked ubiquitination and leaving unchanged the degradative 'Lys-48'-linked ubiquitination. Inhibits the PI3K-AKT-mTOR pathway possibly by directly interacting with the posphatidylinositol 3-kinase regulatory subunit p85 (PIK3R1/PIK3R2) and disrupting the association between PIK3R1/PIK3R2 and the catalytic subunit p110 (PIK3CA/PIK3CB/PIK3CD) and reducing PIK3R1/PIK3R2 activation. Via its regulation of the PI3K-AKT-mTOR pathway, controls cell proliferation, predominantly in intestinal epithelial cells. May also affect NOD1- or NOD2-mediated NF-kappa-B activation. Might also affect the inflammatory response by preventing NLRP3 inflammasome formation, CASP1 cleavage and IL1B maturation. This Mus musculus (Mouse) protein is Protein NLRC3 (Nlrc3).